A 304-amino-acid chain; its full sequence is Non-specific ribonucleoside hydrolase RihC (304 aa).

The active site involves His-233.

This sequence belongs to the IUNH family. RihC subfamily.

In terms of biological role, hydrolyzes both purine and pyrimidine ribonucleosides with a broad-substrate specificity. In Shigella flexneri serotype 5b (strain 8401), this protein is Non-specific ribonucleoside hydrolase RihC.